The chain runs to 358 residues: Glycerophosphodiester phosphodiesterase, periplasmic (358 aa).

The signal sequence occupies residues 1-25; sequence MKLTLKNLSMAIMMSTIVMGSSAMA. Positions 31 to 355 constitute a GP-PDE domain; that stretch reads KIVIAHRGAS…DFPDKAVKFL (325 aa). The active-site Proton acceptor is His36. 2 residues coordinate Ca(2+): Glu63 and Asp65. The Proton donor role is filled by His78. Glu171 is a binding site for Ca(2+).

The protein belongs to the glycerophosphoryl diester phosphodiesterase family. In terms of assembly, homodimer. It depends on Ca(2+) as a cofactor.

It is found in the periplasm. The catalysed reaction is a sn-glycero-3-phosphodiester + H2O = an alcohol + sn-glycerol 3-phosphate + H(+). Glycerophosphodiester phosphodiesterase hydrolyzes glycerophosphodiesters into glycerol-3-phosphate (G3P) and the corresponding alcohol. The chain is Glycerophosphodiester phosphodiesterase, periplasmic (glpQ) from Escherichia coli (strain K12).